Here is a 338-residue protein sequence, read N- to C-terminus: Protein-glutamate methylesterase/protein-glutamine glutaminase 2 (338 aa).

The region spanning 2-119 (RIGIVNDSAL…SDTKLAAGPL (118 aa)) is the Response regulatory domain. The residue at position 53 (D53) is a 4-aspartylphosphate. In terms of domain architecture, CheB-type methylesterase spans 145–330 (PTPTAPRLVA…PLQKIAPRLV (186 aa)). Residues S158, H185, and D278 contribute to the active site.

It belongs to the CheB family. Phosphorylated by CheA. Phosphorylation of the N-terminal regulatory domain activates the methylesterase activity.

The protein localises to the cytoplasm. The enzyme catalyses [protein]-L-glutamate 5-O-methyl ester + H2O = L-glutamyl-[protein] + methanol + H(+). It catalyses the reaction L-glutaminyl-[protein] + H2O = L-glutamyl-[protein] + NH4(+). Functionally, involved in chemotaxis. Part of a chemotaxis signal transduction system that modulates chemotaxis in response to various stimuli. Catalyzes the demethylation of specific methylglutamate residues introduced into the chemoreceptors (methyl-accepting chemotaxis proteins or MCP) by CheR. Also mediates the irreversible deamidation of specific glutamine residues to glutamic acid. The sequence is that of Protein-glutamate methylesterase/protein-glutamine glutaminase 2 from Cupriavidus metallidurans (strain ATCC 43123 / DSM 2839 / NBRC 102507 / CH34) (Ralstonia metallidurans).